Here is a 477-residue protein sequence, read N- to C-terminus: UDP-N-acetylmuramate--L-alanine ligase (477 aa).

G122 to T128 provides a ligand contact to ATP.

The protein belongs to the MurCDEF family.

It localises to the cytoplasm. The catalysed reaction is UDP-N-acetyl-alpha-D-muramate + L-alanine + ATP = UDP-N-acetyl-alpha-D-muramoyl-L-alanine + ADP + phosphate + H(+). It functions in the pathway cell wall biogenesis; peptidoglycan biosynthesis. Functionally, cell wall formation. This chain is UDP-N-acetylmuramate--L-alanine ligase, found in Xanthomonas campestris pv. campestris (strain 8004).